The following is a 360-amino-acid chain: Phospho-N-acetylmuramoyl-pentapeptide-transferase (360 aa).

Helical transmembrane passes span Gly-27–Leu-47, Val-69–Met-89, Trp-93–Phe-113, Leu-134–Ala-154, Val-168–Ala-188, Gly-199–Val-219, Ile-239–Pro-259, Ala-262–Ile-282, Leu-288–Val-308, and Thr-337–Leu-357.

Belongs to the glycosyltransferase 4 family. MraY subfamily. It depends on Mg(2+) as a cofactor.

It is found in the cell inner membrane. It carries out the reaction UDP-N-acetyl-alpha-D-muramoyl-L-alanyl-gamma-D-glutamyl-meso-2,6-diaminopimeloyl-D-alanyl-D-alanine + di-trans,octa-cis-undecaprenyl phosphate = di-trans,octa-cis-undecaprenyl diphospho-N-acetyl-alpha-D-muramoyl-L-alanyl-D-glutamyl-meso-2,6-diaminopimeloyl-D-alanyl-D-alanine + UMP. It functions in the pathway cell wall biogenesis; peptidoglycan biosynthesis. In terms of biological role, catalyzes the initial step of the lipid cycle reactions in the biosynthesis of the cell wall peptidoglycan: transfers peptidoglycan precursor phospho-MurNAc-pentapeptide from UDP-MurNAc-pentapeptide onto the lipid carrier undecaprenyl phosphate, yielding undecaprenyl-pyrophosphoryl-MurNAc-pentapeptide, known as lipid I. The sequence is that of Phospho-N-acetylmuramoyl-pentapeptide-transferase from Ruegeria sp. (strain TM1040) (Silicibacter sp.).